A 355-amino-acid polypeptide reads, in one-letter code: GTP 3',8-cyclase (355 aa).

A Radical SAM core domain is found at 16–242 (RYGRRATDMR…PDPRARDGAP (227 aa)). R25 is a binding site for GTP. 2 residues coordinate [4Fe-4S] cluster: C32 and C36. Position 38 (Y38) interacts with S-adenosyl-L-methionine. C39 provides a ligand contact to [4Fe-4S] cluster. R76 serves as a coordination point for GTP. G80 contributes to the S-adenosyl-L-methionine binding site. T107 lines the GTP pocket. S-adenosyl-L-methionine is bound at residue S131. K168 is a binding site for GTP. M202 contributes to the S-adenosyl-L-methionine binding site. Positions 277 and 280 each coordinate [4Fe-4S] cluster. 282 to 284 (RTR) is a GTP binding site. Residue C294 coordinates [4Fe-4S] cluster.

This sequence belongs to the radical SAM superfamily. MoaA family. In terms of assembly, monomer. [4Fe-4S] cluster serves as cofactor.

It catalyses the reaction GTP + AH2 + S-adenosyl-L-methionine = (8S)-3',8-cyclo-7,8-dihydroguanosine 5'-triphosphate + 5'-deoxyadenosine + L-methionine + A + H(+). The protein operates within cofactor biosynthesis; molybdopterin biosynthesis. In terms of biological role, catalyzes, together with MoaC, the conversion of 5'-GTP to cyclic pyranopterin monophosphate (cPMP or molybdopterin precursor Z). Functionally, catalyzes the cyclization of GTP to (8S)-3',8-cyclo-7,8-dihydroguanosine 5'-triphosphate. This Paenarthrobacter nicotinovorans (Arthrobacter nicotinovorans) protein is GTP 3',8-cyclase.